We begin with the raw amino-acid sequence, 654 residues long: Pyoverdine export ATP-binding/permease protein PvdT (654 aa).

Residues 6 to 245 (IELCDIRKAY…AHKGIQAEEL (240 aa)) enclose the ABC transporter domain. 43-50 (GASGSGKS) contributes to the ATP binding site. 4 helical membrane-spanning segments follow: residues 282-302 (ALTL…LAVG), 529-549 (LSLM…IGVM), 584-604 (AIML…VVGA), and 614-634 (AFAL…GVVF).

This sequence belongs to the ABC transporter superfamily. Macrolide exporter (TC 3.A.1.122) family. As to quaternary structure, part of the tripartite efflux system PvdRT-OpmQ, which is composed of an inner membrane component with both ATPase and permease domains, PvdT, a periplasmic membrane fusion protein, PvdR, and an outer membrane component, OpmQ.

It is found in the cell inner membrane. Its activity is regulated as follows. Has a basal ATPase activity that is stimulated by PvdR. In vitro, interaction with PVD influences the affinity of PvdT to PvdR. In terms of biological role, part of the tripartite efflux system PvdRT-OpmQ required for the secretion into the extracellular milieu of the siderophore pyoverdine (PVD), which is involved in iron acquisition. This subunit binds PVD and drives its secretion by hydrolyzing ATP. The system is responsible for export of newly synthesized PVD after the final steps of biosynthesis have taken place in the periplasm. It is also responsible for recycling of PVD after internalization of ferri-PVD into the periplasm by the outer-membrane receptor FpvA and release of iron from PVD, thus making PVD available for new cycles of iron uptake. Contributes to resistance against ampicillin. The protein is Pyoverdine export ATP-binding/permease protein PvdT of Pseudomonas putida (strain ATCC 47054 / DSM 6125 / CFBP 8728 / NCIMB 11950 / KT2440).